Reading from the N-terminus, the 320-residue chain is GPI-specific phospholipase A2-like PGAP3 (320 aa).

The N-terminal stretch at 1–20 (MAERTARLLLLTVTVGLAWG) is a signal peptide. Over 21-98 (SQGDREPVYR…QFHGKWPFSR (78 aa)) the chain is Lumenal. N40 carries N-linked (GlcNAc...) asparagine glycosylation. The chain crosses the membrane as a helical span at residues 99–119 (FLFIQEPASAVASLLNGLASL). At 120–135 (VMLCRYRASVPASSPM) the chain is on the cytoplasmic side. Residues 136 to 156 (YHTCMAFAWVSLNAWFWSTVF) traverse the membrane as a helical segment. Residues 157 to 169 (HTRDTDLTEKMDY) lie on the Lumenal side of the membrane. The helical transmembrane segment at 170-190 (FCASAVILHSIYLCCVRTVGL) threads the bilayer. Residues 191-198 (QHPSVARA) lie on the Cytoplasmic side of the membrane. The helical transmembrane segment at 199 to 219 (FGATLLLMLLLHTSYLSLVRF) threads the bilayer. Over 220–223 (DYSY) the chain is Lumenal. Residues 224 to 244 (NMMANVAIGLVNLAWWLAWCL) traverse the membrane as a helical segment. The Cytoplasmic portion of the chain corresponds to 245-258 (RNHRRLPHTRKCVA). The helical transmembrane segment at 259–279 (VVLLLQGLSLLELLDFPPLFW) threads the bilayer. At 280-282 (VLD) the chain is on the lumenal side. The helical transmembrane segment at 283 to 303 (AHAIWHISTIPVHVLFFRFLE) threads the bilayer. Residues 304-320 (DDSLYLLKESEAKFKLD) are Cytoplasmic-facing.

It belongs to the PGAP3 family.

The protein localises to the golgi apparatus membrane. Functionally, involved in the fatty acid remodeling steps of GPI-anchor maturation where the unsaturated acyl chain at sn-2 of inositol phosphate is replaced by a saturated stearoyl chain. May catalyze the first step of the fatty acid remodeling, by removing the unsaturated acyl chain at sn-2 of inositol phosphate, generating a lyso-GPI intermediate. The fatty acid remodeling steps is critical for the integration of GPI-APs into lipid rafts. This is GPI-specific phospholipase A2-like PGAP3 (PGAP3) from Cricetulus griseus (Chinese hamster).